The chain runs to 70 residues: Melittin (70 aa).

Positions 1–21 (MKFLVNVALVFMVVYISFIYA) are cleaved as a signal peptide. A propeptide spans 22-43 (APEPEPAPEAEAEADAEADPEA) (removed by a dipeptidylpeptidase). Residue Gly-44 is modified to N-formylglycine; partial. Gln-69 is subject to Glutamine amide.

The protein belongs to the melittin family. Monomer (in solution and for integration into membranes), homotetramer (in solution and potentially as a toroidal pore in membranes), and potenially homomultimer (as a toroidal pore in membranes). As to expression, expressed by the venom gland.

It localises to the secreted. The protein localises to the target cell membrane. In terms of biological role, main toxin of bee venom with strong hemolytic activity and antimicrobial activity. It has enhancing effects on bee venom phospholipase A2 activity. This amphipathic toxin binds to negatively charged membrane surface and forms pore by inserting into lipid bilayers inducing the leakage of ions and molecules and the enhancement of permeability that ultimately leads to cell lysis. It acts as a voltage-gated pore with higher selectivity for anions over cations. The ion conductance has been shown to be voltage-dependent. Self-association of melittin in membranes is promoted by high ionic strength, but not by the presence of negatively charged lipids. In vivo, intradermal injection into healthy human volunteers produce sharp pain sensation and an inflammatory response. It produces pain by activating primary nociceptor cells directly and indirectly due to its ability to activate plasma membrane phospholipase A2 and its pore-forming activity. The chain is Melittin (MELT) from Apis cerana cerana (Oriental honeybee).